Here is a 294-residue protein sequence, read N- to C-terminus: Endonuclease G, mitochondrial (294 aa).

Residues Met-1–Ala-44 constitute a mitochondrion transit peptide. Thr-125 carries the post-translational modification Phosphothreonine. His-138 serves as the catalytic Proton acceptor. Asn-169 contacts Mg(2+). Residues Ala-283 to Ser-293 form an essential for deoxyribonuclease activity region.

It belongs to the DNA/RNA non-specific endonuclease family. Homodimer; disulfide-linked. Homodimerization is essential for its activity. Interacts with YWHAG. Mg(2+) serves as cofactor. Post-translationally, GSK3-beta-mediated phosphorylation at Thr-125 is necessary for its interaction with YWHAG and the induction of autophagy.

The protein resides in the mitochondrion. Functionally, endonuclease that preferentially catalyzes the cleavage of double-stranded 5-hydroxymethylcytosine (5hmC)-modified DNA. The 5hmC-modified nucleotide does not increase the binding affinity, but instead increases the efficiency of cutting and specifies the site of cleavage for the modified DNAs. Shows significantly higher affinity for four-stranded Holliday junction over duplex and single-stranded DNAs. Promotes conservative recombination when the DNA is 5hmC-modified. Promotes autophagy through the suppression of mTOR by its phosphorylation-mediated interaction with YWHAG and its endonuclease activity-mediated DNA damage response. GSK3-beta mediated phosphorylation of ENDOG enhances its interaction with YWHAG, leading to the release of TSC2 and PIK3C3 from YWHAG resulting in mTOR pathway suppression and autophagy initiation. Promotes cleavage of mtDNA in response to oxidative and nitrosative stress, in turn inducing compensatory mtDNA replication. This is Endonuclease G, mitochondrial (Endog) from Mus musculus (Mouse).